The sequence spans 890 residues: tRNase Z TRZ3, mitochondrial (890 aa).

The N-terminal 44 residues, 1 to 44 (MINSMPYLHKNLRLLRLLSSKSSPFPLSLRPFSPRSFSLSTLFS), are a transit peptide targeting the mitochondrion. A disordered region spans residues 46-67 (SSSSSSMENNEATNGSKSSSNS).

It belongs to the RNase Z family. Homodimer. Requires Zn(2+) as cofactor. It depends on Ca(2+) as a cofactor. Mn(2+) is required as a cofactor. The cofactor is Mg(2+).

The protein resides in the mitochondrion. It is found in the nucleus. It catalyses the reaction Endonucleolytic cleavage of RNA, removing extra 3' nucleotides from tRNA precursor, generating 3' termini of tRNAs. A 3'-hydroxy group is left at the tRNA terminus and a 5'-phosphoryl group is left at the trailer molecule.. In terms of biological role, zinc phosphodiesterase, which displays tRNA 3'-processing endonuclease activity. Involved in tRNA maturation, by removing a 3'-trailer from precursor tRNA. Can process the mitochondrial tRNA-like structures (t-elements). Involved in the processing of small nucleolar RNAs (snoRNAs). This is tRNase Z TRZ3, mitochondrial from Arabidopsis thaliana (Mouse-ear cress).